The following is a 966-amino-acid chain: Aminopeptidase N (966 aa).

Residues 1 to 8 are Cytoplasmic-facing; it reads MAKGFYIS. A helical; Signal-anchor for type II membrane protein membrane pass occupies residues 9–32; the sequence is KTLGILGILLGVAAVCTIIALSVV. Positions 33-68 are cytosolic Ser/Thr-rich junction; sequence YAQEKNRNAENSATAPTLPGSTSATTATTTPAVDES. Residues 33–966 lie on the Extracellular side of the membrane; that stretch reads YAQEKNRNAE…VFKWFTENSS (934 aa). Positions 42–64 are disordered; the sequence is ENSATAPTLPGSTSATTATTTPA. Positions 44–64 are enriched in low complexity; that stretch reads SATAPTLPGSTSATTATTTPA. The segment at 69 to 966 is metalloprotease; the sequence is KPWNQYRLPK…VFKWFTENSS (898 aa). N-linked (GlcNAc...) asparagine glycosylation is found at N106, N114, and N128. At Y176 the chain carries Sulfotyrosine. N234, N288, N318, and N332 each carry an N-linked (GlcNAc...) asparagine glycan. Position 351 to 355 (351 to 355) interacts with substrate; that stretch reads GAMEN. Residue H387 coordinates Zn(2+). E388 functions as the Proton acceptor in the catalytic mechanism. Zn(2+)-binding residues include H391 and E410. A sulfotyrosine mark is found at Y418 and Y423. N-linked (GlcNAc...) asparagine glycosylation is found at N573, N606, N624, and N734. A disulfide bridge links C760 with C767. N-linked (GlcNAc...) asparagine glycosylation is found at N784 and N817. C797 and C833 form a disulfide bridge. Y852 carries the phosphotyrosine modification.

It belongs to the peptidase M1 family. As to quaternary structure, homodimer. Interacts with SLC6A19. It depends on Zn(2+) as a cofactor. N- and O-glycosylated. Post-translationally, sulfated. In terms of processing, may undergo proteolysis and give rise to a soluble form. In terms of tissue distribution, expressed in the intestinal brush border (at protein level). Highly expressed in intestinal tract and kidney, present in liver, lymph node, spleen, and brain. Found as well in monocytes, macrophages, dendritic cells, veiled cells and B-cells but not on T-cells and thymocytes.

It localises to the cell membrane. It carries out the reaction Release of an N-terminal amino acid, Xaa-|-Yaa- from a peptide, amide or arylamide. Xaa is preferably Ala, but may be most amino acids including Pro (slow action). When a terminal hydrophobic residue is followed by a prolyl residue, the two may be released as an intact Xaa-Pro dipeptide.. In terms of biological role, broad specificity aminopeptidase which plays a role in the final digestion of peptides generated from hydrolysis of proteins by gastric and pancreatic proteases. Also involved in the processing of various peptides including peptide hormones, such as angiotensin III and IV, neuropeptides, and chemokines. May also be involved the cleavage of peptides bound to major histocompatibility complex class II molecules of antigen presenting cells. May have a role in angiogenesis and promote cholesterol crystallization. May have a role in amino acid transport by acting as binding partner of amino acid transporter SLC6A19 and regulating its activity. This is Aminopeptidase N (Anpep) from Mus musculus (Mouse).